Consider the following 180-residue polypeptide: Nucleoside triphosphate/diphosphate phosphatase (180 aa).

The active-site Proton donor is the Arg-26. Asn-90, Asp-106, Asp-108, Asp-110, Asp-123, and Glu-126 together coordinate Mg(2+).

This sequence belongs to the Ntdp family. Requires Mg(2+) as cofactor.

It carries out the reaction a ribonucleoside 5'-triphosphate + H2O = a ribonucleoside 5'-diphosphate + phosphate + H(+). The enzyme catalyses a ribonucleoside 5'-diphosphate + H2O = a ribonucleoside 5'-phosphate + phosphate + H(+). Has nucleoside phosphatase activity towards nucleoside triphosphates and nucleoside diphosphates. The protein is Nucleoside triphosphate/diphosphate phosphatase of Staphylococcus saprophyticus subsp. saprophyticus (strain ATCC 15305 / DSM 20229 / NCIMB 8711 / NCTC 7292 / S-41).